The chain runs to 167 residues: uncharacterized protein (167 aa).

It to B.subtilis XkdI.

This is an uncharacterized protein from Bacillus subtilis (strain 168).